The following is a 382-amino-acid chain: Lipid-A-disaccharide synthase (382 aa).

The protein belongs to the LpxB family.

The enzyme catalyses 2-N,3-O-bis[(3R)-3-hydroxytetradecanoyl]-alpha-D-glucosaminyl 1-phosphate + UDP-2-N,3-O-bis[(3R)-3-hydroxytetradecanoyl]-alpha-D-glucosamine = lipid A disaccharide (E. coli) + UDP + H(+). The catalysed reaction is a lipid X + a UDP-2-N,3-O-bis[(3R)-3-hydroxyacyl]-alpha-D-glucosamine = a lipid A disaccharide + UDP + H(+). Its pathway is glycolipid biosynthesis; lipid IV(A) biosynthesis; lipid IV(A) from (3R)-3-hydroxytetradecanoyl-[acyl-carrier-protein] and UDP-N-acetyl-alpha-D-glucosamine: step 5/6. In terms of biological role, condensation of UDP-2,3-diacylglucosamine and 2,3-diacylglucosamine-1-phosphate to form lipid A disaccharide, a precursor of lipid A, a phosphorylated glycolipid that anchors the lipopolysaccharide to the outer membrane of the cell. This chain is Lipid-A-disaccharide synthase, found in Citrobacter koseri (strain ATCC BAA-895 / CDC 4225-83 / SGSC4696).